The sequence spans 130 residues: Small ribosomal subunit protein uS8 (130 aa).

This sequence belongs to the universal ribosomal protein uS8 family. In terms of assembly, part of the 30S ribosomal subunit. Contacts proteins S5 and S12.

In terms of biological role, one of the primary rRNA binding proteins, it binds directly to 16S rRNA central domain where it helps coordinate assembly of the platform of the 30S subunit. The sequence is that of Small ribosomal subunit protein uS8 from Buchnera aphidicola subsp. Acyrthosiphon pisum (strain 5A).